The primary structure comprises 268 residues: CCAAT/enhancer-binding protein delta (268 aa).

3 disordered regions span residues 1–50 (MSAA…STTP), 98–132 (LELL…DAPG), and 152–223 (AAQP…QQKL). Serine 2 is modified (N-acetylserine). Lysine 120 participates in a covalent cross-link: Glycyl lysine isopeptide (Lys-Gly) (interchain with G-Cter in SUMO). A compositionally biased stretch (pro residues) spans 155-173 (PTPPTSPEPPRGSPGPSLA). Basic and acidic residues predominate over residues 177–201 (VREKGAGKRGPDRGSPEYRQRRERN). Positions 191-254 (SPEYRQRRER…ASLRQFFKEL (64 aa)) constitute a bZIP domain. A basic motif region spans residues 195 to 222 (RQRRERNNIAVRKSRDKAKRRNQEMQQK). Residues 226-254 (LSAENEKLHQRVEQLTRDLASLRQFFKEL) form a leucine-zipper region.

The protein belongs to the bZIP family. C/EBP subfamily. Binds DNA as a homodimer and as a heterodimer. Can form stable heterodimers with CEBPA, CEBPB and CEBPE. Directly interacts with SPI1/PU.1; this interaction does not affect DNA-binding properties of each partner. Interacts with PRDM16. Ubiquitously expressed.

Its subcellular location is the nucleus. In terms of biological role, transcription activator that recognizes two different DNA motifs: the CCAAT homology common to many promoters and the enhanced core homology common to many enhancers. Important transcription factor regulating the expression of genes involved in immune and inflammatory responses. Transcriptional activator that enhances IL6 transcription alone and as heterodimer with CEBPB. This chain is CCAAT/enhancer-binding protein delta (Cebpd), found in Rattus norvegicus (Rat).